Here is a 287-residue protein sequence, read N- to C-terminus: uncharacterized protein (287 aa).

7 consecutive transmembrane segments (helical) span residues 27–47, 66–86, 97–117, 135–155, 171–191, 205–225, and 254–274; these read LTFSVAAIGILFIFLIGFGVQ, LGTIAFVASLVSLILYFVTAF, WFWGLIIADVISYGITLGVLL, IVFAFLGAALVYGTVWGLSAL, IFIWAFFISIIASLLTFVLNF, LFPGLSLIVGGIFSLLSVYFV, and SALFFGAWLVSSFMNLVYFIL.

It is found in the cell membrane. This is an uncharacterized protein from Mycoplasma pneumoniae (strain ATCC 29342 / M129 / Subtype 1) (Mycoplasmoides pneumoniae).